Reading from the N-terminus, the 139-residue chain is Toxin FitB (139 aa).

The PINc domain maps to 2 to 123 (ILLDTNVISE…HSLTVATRDT (122 aa)). The Mg(2+) site is built by aspartate 5 and aspartate 104.

Belongs to the PINc/VapC protein family. In terms of assembly, forms a heterodimer with FitA, 4 FitAB heterodimers form a complex that binds to promoter DNA. The complex is also seen in solution. This protein does not actually contact DNA. The cofactor is Mg(2+).

In terms of biological role, toxic component of a type II toxin-antitoxin (TA) system. Plays a role in the speed with which bacteria traverse human epithelial cells; disruption of the locus increases the speed of trafficking about 2-4-fold. FitAB binds to its own promoter better than FitA alone. The expected nuclease activity was not observed for the FitAB complex, perhaps because FitA (the antitoxin) prevents metal binding and thus catalysis by FitB. The chain is Toxin FitB (fitB) from Neisseria gonorrhoeae (strain ATCC 700825 / FA 1090).